The primary structure comprises 328 residues: Glycerol-3-phosphate dehydrogenase [NAD(P)+] (328 aa).

NADPH contacts are provided by tryptophan 15, arginine 35, and lysine 108. Sn-glycerol 3-phosphate contacts are provided by lysine 108, glycine 136, and serine 138. Alanine 140 lines the NADPH pocket. Residues lysine 191, aspartate 244, serine 254, arginine 255, and asparagine 256 each coordinate sn-glycerol 3-phosphate. The Proton acceptor role is filled by lysine 191. Residue arginine 255 participates in NADPH binding. NADPH-binding residues include leucine 275 and glutamate 277.

This sequence belongs to the NAD-dependent glycerol-3-phosphate dehydrogenase family.

The protein resides in the cytoplasm. It catalyses the reaction sn-glycerol 3-phosphate + NAD(+) = dihydroxyacetone phosphate + NADH + H(+). The enzyme catalyses sn-glycerol 3-phosphate + NADP(+) = dihydroxyacetone phosphate + NADPH + H(+). The protein operates within membrane lipid metabolism; glycerophospholipid metabolism. Its function is as follows. Catalyzes the reduction of the glycolytic intermediate dihydroxyacetone phosphate (DHAP) to sn-glycerol 3-phosphate (G3P), the key precursor for phospholipid synthesis. The chain is Glycerol-3-phosphate dehydrogenase [NAD(P)+] from Azorhizobium caulinodans (strain ATCC 43989 / DSM 5975 / JCM 20966 / LMG 6465 / NBRC 14845 / NCIMB 13405 / ORS 571).